We begin with the raw amino-acid sequence, 331 residues long: Nucleotide-binding protein SGR_5570 (331 aa).

Residues 1-43 are disordered; sequence MTENTHETAPNTADTDTADFDTADTDRADGAADVSTNTPNETG. Position 55 to 62 (55 to 62) interacts with ATP; the sequence is GMSGAGRS. Position 106 to 109 (106 to 109) interacts with GTP; sequence DVRG.

It belongs to the RapZ-like family.

Its function is as follows. Displays ATPase and GTPase activities. The sequence is that of Nucleotide-binding protein SGR_5570 from Streptomyces griseus subsp. griseus (strain JCM 4626 / CBS 651.72 / NBRC 13350 / KCC S-0626 / ISP 5235).